A 364-amino-acid chain; its full sequence is Glycosyltransferase 8 domain-containing protein 1 (364 aa).

Residues 1–5 lie on the Cytoplasmic side of the membrane; that stretch reads MRRVH. A helical; Signal-anchor for type II membrane protein membrane pass occupies residues 6 to 26; it reads ITVILLAAVIFLLVLHHNILG. Over 27 to 364 the chain is Lumenal; it reads LSDILKRQNS…QFSLIRRHAE (338 aa). N102, N247, and N255 each carry an N-linked (GlcNAc...) asparagine glycan.

Belongs to the glycosyltransferase 8 family.

The protein localises to the membrane. The polypeptide is Glycosyltransferase 8 domain-containing protein 1 (glt8d1) (Xenopus laevis (African clawed frog)).